The primary structure comprises 572 residues: Fatty acid amide hydrolase 1 (572 aa).

An N-terminal signal peptide occupies residues 1–14 (MIFYLVLLVLGAIA). Residues 32–63 (IVAQRRRDDLSKNVEQARKAADKLDTQRRDWI) adopt a coiled-coil conformation. Catalysis depends on charge relay system residues K139 and S214. Residues S214 and 235–238 (VGGS) contribute to the substrate site. The Acyl-ester intermediate role is filled by S238.

The protein belongs to the amidase family. Expressed in the pharynx, some pharyngeal neurons, the posterior intestine and anal depressor muscles.

It catalyses the reaction N-(5Z,8Z,11Z,14Z-eicosatetraenoyl)-ethanolamine + H2O = ethanolamine + (5Z,8Z,11Z,14Z)-eicosatetraenoate. The enzyme catalyses (9Z)-octadecenamide + H2O = (9Z)-octadecenoate + NH4(+). The catalysed reaction is (5Z,8Z,11Z,14Z,17Z-eicosapentaenoyl) ethanolamine + H2O = (5Z,8Z,11Z,14Z,17Z)-eicosapentaenoate + ethanolamine. It carries out the reaction N-(9Z-hexadecenoyl) ethanolamine + H2O = (9Z)-hexadecenoate + ethanolamine. It catalyses the reaction N-(9Z-octadecenoyl) ethanolamine + H2O = ethanolamine + (9Z)-octadecenoate. The enzyme catalyses N-octadecanoyl ethanolamine + H2O = octadecanoate + ethanolamine. The catalysed reaction is N-docosanoyl-ethanolamine + H2O = docosanoate + ethanolamine. It carries out the reaction N-(15Z-tetracosenoyl)-ethanolamine + H2O = (15Z)-tetracosenoate + ethanolamine. It catalyses the reaction N-hexadecanoylethanolamine + H2O = ethanolamine + hexadecanoate. The enzyme catalyses N-(9Z,12Z-octadecadienoyl)-ethanolamine + H2O = ethanolamine + (9Z,12Z)-octadecadienoate. The catalysed reaction is (9Z)-octadecenoate + glycine = N-(9Z-octadecenoyl)glycine + H2O. It carries out the reaction N-(5Z,8Z,11Z,14Z)-eicosatetraenoyl-glycine + H2O = (5Z,8Z,11Z,14Z)-eicosatetraenoate + glycine. It catalyses the reaction N-(5Z,8Z,11Z,14Z-eicosatetraenoyl)-L-serine + H2O = (5Z,8Z,11Z,14Z)-eicosatetraenoate + L-serine. Functionally, catalyzes the hydrolysis of endogenous amidated lipids like anandamide (AEA or N-(5Z,8Z,11Z,14Z-eicosatetraenoyl)-ethanolamine) and eicosapentaneoyl ethanolamide (EPEA or (5Z,8Z,11Z,14Z,17Z-eicosapentaenoyl) ethanolamine), as well as other fatty amides, to their corresponding fatty acids, thereby regulating the signaling functions of these molecules. EPEA promotes dauer formation and may constitute a signal of high nutrient availability. Breakdown of EPEA may promote lifespan extension when nutrient availability is high. Facilitates axon regeneration after injury by degradating inhibitory compounds such as AEA. FAAH cooperates with PM20D1 in the hydrolysis of amino acid-conjugated fatty acids such as N-fatty acyl glycine and N-fatty acyl-L-serine, thereby acting as a physiological regulator of specific subsets of intracellular, but not of extracellular, N-fatty acyl amino acids. The sequence is that of Fatty acid amide hydrolase 1 from Caenorhabditis elegans.